Reading from the N-terminus, the 185-residue chain is F-box protein At1g61340 (185 aa).

The F-box domain maps to 78-126 (SRELEDLPLDILVRIICGVEHEDLKQLFHVSKTIREATMIAKQSHFAYS).

The protein is F-box protein At1g61340 of Arabidopsis thaliana (Mouse-ear cress).